We begin with the raw amino-acid sequence, 77 residues long: DNA-directed RNA polymerase subunit Rpo5 (77 aa).

Belongs to the archaeal Rpo5/eukaryotic RPB5 RNA polymerase subunit family. As to quaternary structure, part of the RNA polymerase complex.

It localises to the cytoplasm. The enzyme catalyses RNA(n) + a ribonucleoside 5'-triphosphate = RNA(n+1) + diphosphate. DNA-dependent RNA polymerase (RNAP) catalyzes the transcription of DNA into RNA using the four ribonucleoside triphosphates as substrates. In Methanosphaera stadtmanae (strain ATCC 43021 / DSM 3091 / JCM 11832 / MCB-3), this protein is DNA-directed RNA polymerase subunit Rpo5.